The primary structure comprises 373 residues: SH3 domain-binding protein 5-like (373 aa).

Positions 1 to 53 are disordered; it reads MEGKEGPSCEVRLPTPGAEREGPIHPELGAFGETASNTIKLSESSNDGKKEEI. The span at 34-45 shows a compositional bias: polar residues; it reads TASNTIKLSESS. Coiled coils occupy residues 55–98 and 170–272; these read EELD…ESAR and WQEM…SEEI. Disordered stretches follow at residues 276-305 and 344-373; these read RTQS…TGPP and TGAV…SVSL. Over residues 344-358 the composition is skewed to basic and acidic residues; that stretch reads TGAVECGGSRERGGD.

This sequence belongs to the SH3BP5 family.

Functionally, functions as a guanine nucleotide exchange factor (GEF) for rab11a. The sequence is that of SH3 domain-binding protein 5-like (sh3bp5l) from Xenopus tropicalis (Western clawed frog).